The chain runs to 499 residues: WD repeat-containing protein 55 homolog (499 aa).

Residues 1-130 (MHTHNNFKTP…EATFDLDVDD (130 aa)) form a disordered region. Composition is skewed to acidic residues over residues 12–23 (DEDELDDLDEDM) and 31–48 (IEQE…EYDL). Positions 91 to 103 (DDAGGASAGGATS) are enriched in low complexity. Positions 113–122 (PSGSNRQSEA) are enriched in polar residues. 6 WD repeats span residues 154 to 193 (KLED…NKLL), 198 to 237 (VHSK…LKKL), 241 to 279 (AHDD…AIFE), 282 to 321 (ELED…MYVQ), 324 to 363 (PYEE…YHCD), and 408 to 447 (QHNM…DFGD). Positions 480–499 (TKEDADDDDHDPSAGPSNMA) are disordered.

It belongs to the WD repeat WDR55 family.

This chain is WD repeat-containing protein 55 homolog, found in Drosophila yakuba (Fruit fly).